Reading from the N-terminus, the 121-residue chain is Small ribosomal subunit protein uS11 (121 aa).

This sequence belongs to the universal ribosomal protein uS11 family. In terms of assembly, part of the 30S ribosomal subunit. Interacts with proteins S7 and S18. Binds to IF-3.

Functionally, located on the platform of the 30S subunit, it bridges several disparate RNA helices of the 16S rRNA. Forms part of the Shine-Dalgarno cleft in the 70S ribosome. The sequence is that of Small ribosomal subunit protein uS11 from Mycoplasmoides gallisepticum (strain R(low / passage 15 / clone 2)) (Mycoplasma gallisepticum).